Consider the following 704-residue polypeptide: Lebercilin (704 aa).

The segment covering 1–14 (MGERARSPDIEQGK) has biased composition (basic and acidic residues). The segment at 1–80 (MGERARSPDI…VSPKAVPSKK (80 aa)) is disordered. Position 7 is a phosphoserine (serine 7). A compositionally biased stretch (low complexity) spans 25-40 (SSDLGSSPQSSGPSSP). Serine 48 is modified (phosphoserine). Residues 49 to 63 (TREKNPKRHLSDNQV) are compositionally biased toward basic and acidic residues. The stretch at 105 to 300 (KRVLSARLLK…KEKELDIKNI (196 aa)) forms a coiled coil. 2 disordered regions span residues 389–417 (QEGKYDEDEDPCSAKQEARKPESEWAREE) and 476–661 (ELQD…GDEE). A compositionally biased stretch (basic and acidic residues) spans 404-417 (QEARKPESEWAREE). The stretch at 448-479 (AQSVDKFEDEAERLKTEMLLAKLNEINKELQD) forms a coiled coil. Over residues 496–505 (SKLHSPDRST) the composition is skewed to basic and acidic residues. A compositionally biased stretch (polar residues) spans 570-591 (GKSNPPSQKSSLLDFQSNSSES). A compositionally biased stretch (basic and acidic residues) spans 592-608 (PSKDSLDLMSRKEKKAT). A compositionally biased stretch (low complexity) spans 617–627 (SASNTSVSSKS).

This sequence belongs to the LCA5 family. As to quaternary structure, interacts with NINL. Interacts with OFD1. Interacts with FAM161A. Interacts with components of the IFT complex B. Detected in several tissues.

It is found in the cytoplasm. It localises to the cytoskeleton. Its subcellular location is the cilium axoneme. The protein resides in the cilium basal body. The protein localises to the cell projection. It is found in the cilium. In terms of biological role, involved in intraflagellar protein (IFT) transport in photoreceptor cilia. The polypeptide is Lebercilin (Lca5) (Mus musculus (Mouse)).